Here is a 541-residue protein sequence, read N- to C-terminus: Protein yellow (541 aa).

Residues 1-21 (MFQDKGWVLLTLITLVSPSWA) form the signal peptide. N-linked (GlcNAc...) asparagine glycosylation occurs at asparagine 144.

The protein belongs to the major royal jelly protein family.

Its subcellular location is the secreted. Its function is as follows. Controls the pigmentation pattern of the adult cuticle and larval mouth parts. This chain is Protein yellow (y), found in Drosophila yakuba (Fruit fly).